A 38-amino-acid chain; its full sequence is Conotoxin FVIA (38 aa).

The propeptide occupies 1–12; that stretch reads ILSLSLLDRSTR. 3 disulfide bridges follow: Cys13-Cys28, Cys20-Cys32, and Cys27-Cys37. Cys37 is subject to Cysteine amide.

Belongs to the conotoxin O1 superfamily. Expressed by the venom duct.

It localises to the secreted. Omega-conotoxins act at presynaptic membranes, they bind and block voltage-gated calcium channels (Cav). This peptide reversibly and selectively inhibits Cav2.2/CACNA1B (IC(50)=11.5 nM) voltage-gated calcium channels. Channel time recovery after toxin exposure is short (about 50 seconds). In vivo, it effectively and dose-dependently reduces nociceptive behavior in the formalin test and in neuropathic pain models, and reduces mechanical and thermal allodynia in the tail nerve injury rat model. It also shows significant analgesic effects on writhing in mouse neurotransmitter- and cytokine-induced pain models, though it has no effect on acute thermal pain and interferon-gamma-induced pain. It also depresses blood pressure immediately after administration, but pressure recovers relatively quickly and completely. The sequence is that of Conotoxin FVIA from Conus fulmen (Thunderbolt cone).